Consider the following 322-residue polypeptide: MKNVFLDFEKGIEEFEAKIEQLRFAQDNSALDISAEITRLQAKSQGLTKSVYAKLTPWQISQVARHPLRPSTLDYIKHLFTDFEELHGDRNFADDRAIVGGLAHFNGQTVMLIGHQKGHDTKEKIYRNFGMPKPEGYRKALRLMRLAEKFSIPLITFVDTPGAYPGIDAEERGQSEAIGKNLYVMAGLRIPIICIIIGEGGSGGALAIAVGDTSLMLQYSVYSVISPEGCASILWKSADKASDAAEILGITADRLKEMALIDTIIPEPVGGAHRDYPAVMQSVRQALQESLRKLQDIPLETLLQKRLDRLLGYGRFKINKPD.

The 264-residue stretch at 30–293 folds into the CoA carboxyltransferase C-terminal domain; it reads ALDISAEITR…RQALQESLRK (264 aa).

Belongs to the AccA family. As to quaternary structure, acetyl-CoA carboxylase is a heterohexamer composed of biotin carboxyl carrier protein (AccB), biotin carboxylase (AccC) and two subunits each of ACCase subunit alpha (AccA) and ACCase subunit beta (AccD).

It localises to the cytoplasm. The catalysed reaction is N(6)-carboxybiotinyl-L-lysyl-[protein] + acetyl-CoA = N(6)-biotinyl-L-lysyl-[protein] + malonyl-CoA. The protein operates within lipid metabolism; malonyl-CoA biosynthesis; malonyl-CoA from acetyl-CoA: step 1/1. Component of the acetyl coenzyme A carboxylase (ACC) complex. First, biotin carboxylase catalyzes the carboxylation of biotin on its carrier protein (BCCP) and then the CO(2) group is transferred by the carboxyltransferase to acetyl-CoA to form malonyl-CoA. The protein is Acetyl-coenzyme A carboxylase carboxyl transferase subunit alpha of Nitrosomonas eutropha (strain DSM 101675 / C91 / Nm57).